The sequence spans 675 residues: PTS system glucose-specific EIICBA component (675 aa).

The region spanning 3–414 (KKFFGQLQRI…FNFKTPGRED (412 aa)) is the PTS EIIC type-1 domain. 11 helical membrane passes run 16 to 36 (LMLP…GNAF), 63 to 83 (AGGI…AIGL), 89 to 109 (VAAI…GMFL), 126 to 146 (VLGI…GALA), 170 to 190 (FVPI…AIIW), 199 to 219 (AFSE…FGFI), 273 to 293 (FMQG…LAIY), 303 to 323 (VVAG…ITEP), 329 to 349 (LFVA…SFLI), 355 to 375 (LHLG…GILP), and 383 to 403 (VIPV…FLIV). The PTS EIIB type-1 domain occupies 425–506 (SELPFKVLDA…QQIMDGKITS (82 aa)). The active-site Phosphocysteine intermediate; for EIIB activity is the Cys-447. The PTS EIIA type-1 domain occupies 547 to 651 (DKVFSEKMMG…STITPIVVTN (105 aa)). His-599 acts as the Tele-phosphohistidine intermediate; for EIIA activity in catalysis.

The protein localises to the cell membrane. It carries out the reaction N(pros)-phospho-L-histidyl-[protein] + D-glucose(out) = D-glucose 6-phosphate(in) + L-histidyl-[protein]. With respect to regulation, inhibited by 2-deoxyglucose and methyl beta-D-glucoside, but not by methyl alpha-D-glucoside, p-nitrophenyl alpha-D-glucoside, o-nitrophenyl beta-D-glucoside and salicin. In terms of biological role, the phosphoenolpyruvate-dependent sugar phosphotransferase system (sugar PTS), a major carbohydrate active transport system, catalyzes the phosphorylation of incoming sugar substrates concomitantly with their translocation across the cell membrane. This system is involved in glucose transport. Cannot transport galactose, fructose, mannose, cellobiose, sucrose, maltose, lactose, melibiose and trehalose, as well as N-acetylglucosamine. The chain is PTS system glucose-specific EIICBA component (ptsG) from Staphylococcus carnosus (strain TM300).